The sequence spans 266 residues: Glutamate racemase (266 aa).

Residues 9–10 (DS) and 41–42 (YG) contribute to the substrate site. The active-site Proton donor/acceptor is C72. Position 73–74 (73–74 (NT)) interacts with substrate. C184 serves as the catalytic Proton donor/acceptor. 185 to 186 (TH) contacts substrate.

This sequence belongs to the aspartate/glutamate racemases family.

The catalysed reaction is L-glutamate = D-glutamate. It participates in cell wall biogenesis; peptidoglycan biosynthesis. Functionally, provides the (R)-glutamate required for cell wall biosynthesis. This Staphylococcus aureus (strain Mu3 / ATCC 700698) protein is Glutamate racemase.